We begin with the raw amino-acid sequence, 96 residues long: Bacterial microcompartment shell protein EutM (96 aa).

Residues 3-87 enclose the BMC domain; it reads ALGMIETRGL…PHGDLEEVFP (85 aa).

Belongs to the bacterial microcompartments protein family. In terms of assembly, homohexamer with a central pore of up to 8.6 Angstroms diameter. The hexamers pack into a two-dimensional array. Interacts with EutQ; a probably cytoplasm-facing helix (Val-49 to Gln-64) interacts with N-terminus of EutQ.

It is found in the bacterial microcompartment. The protein operates within amine and polyamine degradation; ethanolamine degradation. Functionally, probably a major component of the bacterial microcompartment (BMC) shell dedicated to ethanolamine degradation. Each homohexamer has a central pore with an opening of up to 8.6 Angstroms. A positively-charged funnel leads to the pore from each side of the hexamer. The pore probably allows metabolite passage into and out of the BMC. Expression of eutK, eutL, eutM, eutN, eutS (eutSMNLK) in E.coli leads to formation of a single BMC. Expression alone leads to thick filaments that interfere with cell separation. Coexpression of eutQ with eutSMNLK permits E.coli to make cells with more than one mobile BMC, as is usual in vivo. May play a role in BMC shell biogenesis. Can replace homolog pduA in the pdu operon, cells grow better than wild-type on 1,2-propanediol and vitamin B12. Protein is incorporated into the pdu BMC microcompartment. In terms of biological role, the ethanolamine (EA) catabolic bacterial microcompartment (BMC) probably concentrates low levels of ethanolamine catabolic enzymes, concentrates volatile reaction intermediates, keeps the level of toxic acetaldehyde low, generates enough acetyl-CoA to support cell growth, and maintains a pool of free coenzyme A (CoA) and NAD. Deletion of BMC genes (eutK, eutL, eutM) restores growth of eutD deletions, suggesting there are dedicated pools of coenzyme A (CoA) and NAD in the BMC. Expression of the eut operon allows this bacteria to use ethanolamine as a carbon, nitrogen and energy source. It relies on cobalamin (vitamin B12) both as a cofactor for the ethanolamine ammonia-lyase (EAL) activity and to induce the operon. EA enhances bacterial survival in macrophages in a concentration-dependent manner, suggesting it is an important nutrient during infection. This chain is Bacterial microcompartment shell protein EutM, found in Salmonella typhimurium (strain LT2 / SGSC1412 / ATCC 700720).